The primary structure comprises 926 residues: Neurofilament medium polypeptide (926 aa).

Over residues 1 to 10 (MSYTLDSLGN) the composition is skewed to polar residues. 2 disordered regions span residues 1–51 (MSYT…VSSS) and 79–102 (QSSS…SNEK). Serine 2 carries the N-acetylserine modification. The head stretch occupies residues 2–104 (SYTLDSLGNP…KLSRSNEKEQ (103 aa)). The span at 21–44 (RSSFSRISGSPSSGFRSQSWSRGS) shows a compositional bias: low complexity. A Phosphoserine modification is found at serine 30. Residue arginine 42 is modified to Omega-N-methylarginine. Threonine 47 is a glycosylation site (O-linked (GlcNAc) threonine). Residue serine 99 is modified to Phosphoserine. One can recognise an IF rod domain in the interval 101–412 (EKEQIQGLND…KLLEGEETRF (312 aa)). A coil 1A region spans residues 105–136 (IQGLNDRFAGYIEKVHYLEQQNKEIEAEIQAL). Residues 137 to 149 (RQKQASHAQLGDA) are linker 1. A coil 1B region spans residues 150-248 (YDQEIRELRA…EEEVADLLAQ (99 aa)). Serine 226 is subject to Phosphoserine. The interval 249–265 (IQASHITVERKDYLKTD) is linker 12. The segment at 266-287 (ISTALKEIRSQLESHSDQNMHQ) is coil 2A. Residues 288–291 (AEEW) are linker 2. Positions 292-412 (FKCRYAKLTE…KLLEGEETRF (121 aa)) are coil 2B. Tyrosine 320 carries the phosphotyrosine modification. 5 positions are modified to phosphoserine: serine 346, serine 418, serine 430, serine 468, and serine 484. The interval 413 to 926 (STFAGSITGP…AIVKEVTQSD (514 aa)) is tail. Positions 487-860 (EEVKEEEAEE…EKKGGDKSEE (374 aa)) are disordered. Residues 490–507 (KEEEAEEKEEKEEAEEEV) show a composition bias toward acidic residues. Repeat 1 spans residues 512–516 (KSPVK). The segment at 512–698 (KSPVKATAPE…KSPAPKSPVE (187 aa)) is 17 X 5 AA approximate tandem repeats of K-S-P-[TVEA]-[AKETP]. Serine 513 bears the Phosphoserine mark. The span at 523-543 (KEEEGEKEEEEGQEEEEEEEE) shows a compositional bias: acidic residues. The span at 544–563 (AAKSDQAEEGGSEKEGSSEK) shows a compositional bias: basic and acidic residues. Phosphoserine occurs at positions 547, 555, 560, and 561. The span at 564 to 584 (EEGEQEEEGETEAEGEGEEAA) shows a compositional bias: acidic residues. Phosphothreonine is present on threonine 574. Residues 585 to 619 (AEAKEEKKMEEKAEEVAPKEELAAEAKVEKPEKAK) are compositionally biased toward basic and acidic residues. Repeat copies occupy residues 619 to 623 (KSPVA), 624 to 628 (KSPTT), 629 to 633 (KSPTA), 634 to 638 (KSPEA), 639 to 643 (KSPEA), 644 to 648 (KSPTA), 649 to 653 (KSPTA), 654 to 658 (KSPVA), 659 to 663 (KSPTA), 664 to 668 (KSPEA), 669 to 673 (KSPEA), 674 to 678 (KSPTA), 679 to 683 (KSPTA), 684 to 688 (KSPAA), 689 to 693 (KSPAP), and 694 to 698 (KSPVE). Phosphothreonine is present on threonine 628. Phosphoserine occurs at positions 630, 635, and 640. Phosphothreonine is present on threonine 647. Residues serine 650 and serine 655 each carry the phosphoserine modification. Residues serine 665 and serine 670 each carry the phosphoserine modification. Over residues 673 to 692 (AKSPTAKSPTAKSPAAKSPA) the composition is skewed to low complexity. Position 677 is a phosphothreonine (threonine 677). 10 positions are modified to phosphoserine: serine 680, serine 685, serine 690, serine 695, serine 727, serine 751, serine 757, serine 771, serine 831, and serine 847. Basic and acidic residues-rich tracts occupy residues 696–764 (PVEE…EEVP), 771–811 (SPEK…KEDI), and 826–838 (TKEK…EEKG). Positions 849–860 (GDEKKGGDKSEE) are enriched in basic and acidic residues.

As to quaternary structure, forms heterodimers with NEFL; which can further hetero-oligomerize (in vitro). Forms heterodimers with INA (in vitro). In terms of processing, phosphorylated on a number of serine residues in the repeated K-S-P tripeptide motif. Phosphorylation of NFH may result in the formation of interfilament cross-links that are important in the maintenance of axonal caliber. Post-translationally, phosphorylation seems to play a major role in the functioning of the larger neurofilament polypeptides (NF-M and NF-H), the levels of phosphorylation being altered developmentally and coincidentally with a change in the neurofilament function. Phosphorylated in the head and rod regions by the PKC kinase PKN1, leading to the inhibition of polymerization.

It is found in the cytoplasm. The protein localises to the cytoskeleton. Its subcellular location is the cell projection. It localises to the axon. Functionally, neurofilaments usually contain three intermediate filament proteins: NEFL, NEFM, and NEFH which are involved in the maintenance of neuronal caliber. May additionally cooperate with the neuronal intermediate filament proteins PRPH and INA to form neuronal filamentous networks. The protein is Neurofilament medium polypeptide (NEFM) of Bos taurus (Bovine).